Reading from the N-terminus, the 201-residue chain is Small ribosomal subunit protein uS4 (201 aa).

The disordered stretch occupies residues 1–46; the sequence is MARYTGPRSRISRRFGEPVMGDSKALQKKNYAPGMHGRNKKRKQSE. Residues 92–151 form the S4 RNA-binding domain; that stretch reads ARLDNTVYRLGIASSRRAARQLVIHKHIVVNGDVVNIPSYQLKPGDQLGVREKSKSIEAI.

It belongs to the universal ribosomal protein uS4 family. In terms of assembly, part of the 30S ribosomal subunit. Contacts protein S5. The interaction surface between S4 and S5 is involved in control of translational fidelity.

In terms of biological role, one of the primary rRNA binding proteins, it binds directly to 16S rRNA where it nucleates assembly of the body of the 30S subunit. Its function is as follows. With S5 and S12 plays an important role in translational accuracy. This Cytophaga hutchinsonii (strain ATCC 33406 / DSM 1761 / CIP 103989 / NBRC 15051 / NCIMB 9469 / D465) protein is Small ribosomal subunit protein uS4.